Consider the following 315-residue polypeptide: MIVVVIADKEFYGWAESVPYARYDESISTSTKQIKALFCDRSFTRKMELSELINTLPAGAARNALDCAMWDLQAKQSTRPVAEILSKTSITSICAHTLSIDTPKAMQEAVLAMNSPPLVKVKLDKQDIIARMTAIANAAPHSQFIVDANEDWCFRDLEENVEALKALNVVLIEQPLPAGEDEQLINFTSPIPLCADESCHTENDLPYLQGRYQVVNIKLDKTGGLTQACSLASKAQKMGFDIMLGCMVGSSLAMAPASLLASQARYVDLDGPLLVLKDRKHHFTYADGQMSPLQSCLWGGAHNSERFFVDRLQLQ.

Residues Asp147, Glu173, and Asp196 each coordinate Mg(2+).

It belongs to the mandelate racemase/muconate lactonizing enzyme family. The cofactor is Mg(2+).

The enzyme catalyses N-acetyl-D-glutamate = N-acetyl-L-glutamate. It functions in the pathway amino-acid degradation. Its function is as follows. Racemase involved in a deamination-independent D-glutamate degradation pathway, named the DgcN-DgcA pathway. Catalyzes the conversion of N-acetyl-D-glutamate to N-acetyl-L-glutamate. Also shows racemase activity towards the dipeptide L-Ala-D-Glu, a key constituent of peptidoglycan muropeptides, suggesting that it may also contribute to the degradation of peptidoglycans. This is N-acetyl-D-glutamate racemase from Pseudoalteromonas sp.